The sequence spans 275 residues: Ribosomal RNA small subunit methyltransferase A (275 aa).

S-adenosyl-L-methionine is bound by residues Asn21, Leu23, Gly48, Glu69, Asp94, and Asn115.

It belongs to the class I-like SAM-binding methyltransferase superfamily. rRNA adenine N(6)-methyltransferase family. RsmA subfamily.

The protein resides in the cytoplasm. The catalysed reaction is adenosine(1518)/adenosine(1519) in 16S rRNA + 4 S-adenosyl-L-methionine = N(6)-dimethyladenosine(1518)/N(6)-dimethyladenosine(1519) in 16S rRNA + 4 S-adenosyl-L-homocysteine + 4 H(+). Specifically dimethylates two adjacent adenosines (A1518 and A1519) in the loop of a conserved hairpin near the 3'-end of 16S rRNA in the 30S particle. May play a critical role in biogenesis of 30S subunits. In Clostridium botulinum (strain ATCC 19397 / Type A), this protein is Ribosomal RNA small subunit methyltransferase A.